The primary structure comprises 351 residues: N-acetyl-gamma-glutamyl-phosphate reductase (351 aa).

Residue cysteine 154 is part of the active site.

It belongs to the NAGSA dehydrogenase family. Type 1 subfamily.

It localises to the cytoplasm. The enzyme catalyses N-acetyl-L-glutamate 5-semialdehyde + phosphate + NADP(+) = N-acetyl-L-glutamyl 5-phosphate + NADPH + H(+). It functions in the pathway amino-acid biosynthesis; L-arginine biosynthesis; N(2)-acetyl-L-ornithine from L-glutamate: step 3/4. Functionally, catalyzes the NADPH-dependent reduction of N-acetyl-5-glutamyl phosphate to yield N-acetyl-L-glutamate 5-semialdehyde. In Prochlorococcus marinus (strain MIT 9301), this protein is N-acetyl-gamma-glutamyl-phosphate reductase.